The primary structure comprises 220 residues: Glutathione peroxidase (220 aa).

The active site involves selenocysteine 64. Selenocysteine 64 is a non-standard amino acid (selenocysteine).

The protein belongs to the glutathione peroxidase family. Post-translationally, during periods of oxidative stress, Sec-64 may react with a superoxide radical, irreversibly lose hydroselenide and be converted to dehydroalanine.

It carries out the reaction 2 glutathione + H2O2 = glutathione disulfide + 2 H2O. Functionally, may protect the virus and component of infected cells from oxidative damage by peroxides whose formation may be stimulated by infection. This chain is Glutathione peroxidase (GPX1), found in Homo sapiens (Human).